The sequence spans 312 residues: Beta-ketoacyl-[acyl-carrier-protein] synthase III 1 (312 aa).

Active-site residues include C113 and H237. Residues 238–242 form an ACP-binding region; that stretch reads QANIR. N267 is an active-site residue.

The protein belongs to the thiolase-like superfamily. FabH family. Homodimer.

It localises to the cytoplasm. It carries out the reaction malonyl-[ACP] + acetyl-CoA + H(+) = 3-oxobutanoyl-[ACP] + CO2 + CoA. It participates in lipid metabolism; fatty acid biosynthesis. Its function is as follows. Catalyzes the condensation reaction of fatty acid synthesis by the addition to an acyl acceptor of two carbons from malonyl-ACP. Catalyzes the first condensation reaction which initiates fatty acid synthesis and may therefore play a role in governing the total rate of fatty acid production. Possesses both acetoacetyl-ACP synthase and acetyl transacylase activities. Its substrate specificity determines the biosynthesis of branched-chain and/or straight-chain of fatty acids. The polypeptide is Beta-ketoacyl-[acyl-carrier-protein] synthase III 1 (Halalkalibacterium halodurans (strain ATCC BAA-125 / DSM 18197 / FERM 7344 / JCM 9153 / C-125) (Bacillus halodurans)).